The following is a 250-amino-acid chain: Pimeloyl-[acyl-carrier protein] methyl ester esterase (250 aa).

Residues tryptophan 12, 71 to 72, and 138 to 142 each bind substrate; these read SL and FVALQ. The active-site Nucleophile is serine 71. Catalysis depends on residues aspartate 202 and histidine 230. Histidine 230 lines the substrate pocket.

It belongs to the AB hydrolase superfamily. Carboxylesterase BioH family. In terms of assembly, monomer.

The protein localises to the cytoplasm. The catalysed reaction is 6-carboxyhexanoyl-[ACP] methyl ester + H2O = 6-carboxyhexanoyl-[ACP] + methanol + H(+). The protein operates within cofactor biosynthesis; biotin biosynthesis. Functionally, the physiological role of BioH is to remove the methyl group introduced by BioC when the pimeloyl moiety is complete. It allows to synthesize pimeloyl-ACP via the fatty acid synthetic pathway through the hydrolysis of the ester bonds of pimeloyl-ACP esters. The polypeptide is Pimeloyl-[acyl-carrier protein] methyl ester esterase (Aromatoleum aromaticum (strain DSM 19018 / LMG 30748 / EbN1) (Azoarcus sp. (strain EbN1))).